Here is a 433-residue protein sequence, read N- to C-terminus: Serine hydroxymethyltransferase (433 aa).

(6S)-5,6,7,8-tetrahydrofolate-binding positions include Leu131 and 135–137 (GHL). An N6-(pyridoxal phosphate)lysine modification is found at Lys240.

This sequence belongs to the SHMT family. In terms of assembly, homodimer. It depends on pyridoxal 5'-phosphate as a cofactor.

It localises to the cytoplasm. It carries out the reaction (6R)-5,10-methylene-5,6,7,8-tetrahydrofolate + glycine + H2O = (6S)-5,6,7,8-tetrahydrofolate + L-serine. Its pathway is one-carbon metabolism; tetrahydrofolate interconversion. It participates in amino-acid biosynthesis; glycine biosynthesis; glycine from L-serine: step 1/1. Catalyzes the reversible interconversion of serine and glycine with tetrahydrofolate (THF) serving as the one-carbon carrier. This reaction serves as the major source of one-carbon groups required for the biosynthesis of purines, thymidylate, methionine, and other important biomolecules. Also exhibits THF-independent aldolase activity toward beta-hydroxyamino acids, producing glycine and aldehydes, via a retro-aldol mechanism. This chain is Serine hydroxymethyltransferase, found in Bifidobacterium adolescentis (strain ATCC 15703 / DSM 20083 / NCTC 11814 / E194a).